The chain runs to 938 residues: Auxilin (938 aa).

Residues 19-41 are disordered; it reads AAAGENRMKDSENKGASSPDMEP. A run of 3 repeats spans residues 61–64, 65–68, and 69–72. The 3 X 4 AA approximate tandem repeats stretch occupies residues 61 to 72; the sequence is NLKDNLKDTLKD. One can recognise a Phosphatase tensin-type domain in the interval 80–247; that stretch reads SVSSYTKGDL…GYMCDLLADK (168 aa). Phosphoserine is present on Ser-137. The Phosphocysteine intermediate role is filled by Cys-189. The C2 tensin-type domain maps to 253-391; the sequence is FKPLTIKAIT…FQVTLDIEVQ (139 aa). An SH3-binding motif is present at residues 434-442; it reads PADLPPDHP. A disordered region spans residues 467-801; sequence EEDHAALVNQ…GKGSTNLEGK (335 aa). Phosphoserine is present on residues Ser-478 and Ser-481. The segment covering 531–548 has biased composition (polar residues); that stretch reads DVSTNFSSLAAPPSNSEL. Residues 559–569 show a composition bias toward low complexity; it reads TGPAQAGQAGV. Composition is skewed to polar residues over residues 579–596 and 624–654; these read VSAQSTPRRTATSASASP and FLNTSSASSDPFLQPTRSPSPTVHASSTPAV. Phosphoserine is present on Ser-595. Residues 679 to 694 show a composition bias toward low complexity; sequence SAATSPTGSSHGTPTH. The segment covering 754–781 has biased composition (polar residues); sequence NWQQTQSKPQSSMPHSSPQNRPNYNVSF. The region spanning 874 to 938 is the J domain; sequence TKWKPVGMAD…FENQGQKPLY (65 aa).

Forms a complex composed of HSPA8, CLTC and DNAJC6. Interacts with HSPA8/HSC70 in an ATP-dependent manner; this interaction stimulates the HSPA8's ATPase activity. Interacts with CLTC; this interaction produces a local change in heavy-chain contacts, creating a detectable global distortion of the clathrin coat. Interacts with AP2A2. Interacts with DNM1(GTP-bound form); this interaction allows clathrin-coated vesicle (CCV) formation at the plasma membrane. The N-terminus is blocked. In terms of processing, phosphorylation at Ser-595 modulates its ability to bind CLTC and therefore the synaptic vesicle endocytosis (SVE).

It is found in the cytoplasmic vesicle. It localises to the clathrin-coated vesicle. Its function is as follows. May act as a protein phosphatase and/or a lipid phosphatase. Co-chaperone that recruits HSPA8/HSC70 to clathrin-coated vesicles (CCVs) and promotes the ATP-dependent dissociation of clathrin from CCVs and participates in clathrin-mediated endocytosis of synaptic vesicles and their recycling and also in intracellular trafficking. Firstly, binds tightly to the clathrin cages, at a ratio of one DNAJC6 per clathrin triskelion. The HSPA8:ATP complex then binds to the clathrin-auxilin cage, initially at a ratio of one HSPA8 per triskelion leading to ATP hydrolysis stimulation and causing a conformational change in the HSPA8. This cycle is repeated three times to drive to a complex containing the clathrin-auxilin cage associated to three HSPA8:ADP complex. The ATP hydrolysis of the third HSPA8:ATP complex leads to a concerted dismantling of the cage into component triskelia. Then, dissociates from the released triskelia and be recycled to initiate another cycle of HSPA8's recruitment. Also acts during the early steps of clathrin-coated vesicle (CCV) formation through its interaction with the GTP bound form of DNM1. In Mus musculus (Mouse), this protein is Auxilin.